The sequence spans 421 residues: Testin (421 aa).

The region spanning 92 to 199 is the PET domain; it reads MILTNPVAAK…GDVKLPQEMD (108 aa). 3 consecutive LIM zinc-binding domains span residues 234-297, 299-359, and 362-421; these read YSCY…CDSE, PRCA…NHAV, and QGCH…KMMS.

Belongs to the prickle / espinas / testin family. Interacts via LIM domain 1 with ZYX. Interacts (via LIM domain 3) with ENAH and VASP. Interacts with ALKBH4, talin, actin, alpha-actinin, GRIP1 and PXN. Interacts (via LIM domain 2) with ACTL7A (via N-terminus). Heterodimer with ACTL7A; the heterodimer interacts with ENAH to form a heterotrimer.

Its subcellular location is the cytoplasm. The protein localises to the cell junction. It localises to the focal adhesion. Scaffold protein that may play a role in cell adhesion, cell spreading and in the reorganization of the actin cytoskeleton. Plays a role in the regulation of cell proliferation. May act as a tumor suppressor. The protein is Testin (TES) of Loxodonta africana (African elephant).